Reading from the N-terminus, the 373-residue chain is C-C chemokine receptor type 2 (373 aa).

Topologically, residues 1–60 are extracellular; it reads MEDSNMLPQFIHGILSTSHSLFPRSIQELDEGATTPYDYDDGEPCHKTSVKQIGAWILPP. A helical transmembrane segment spans residues 61-81; sequence LYSLVFIFGFVGNMLVIIILI. Residues 82–91 lie on the Cytoplasmic side of the membrane; sequence SCKKLKSMTD. The helical transmembrane segment at 92–112 threads the bilayer; sequence IYLFNLAISDLLFLLTLPFWA. Over 113–128 the chain is Extracellular; it reads HYAANEWVFGNIMCKL. Cys126 and Cys203 are joined by a disulfide. The helical transmembrane segment at 129–149 threads the bilayer; sequence FTGLYHIGYFGGIFFIILLTI. Over 150–170 the chain is Cytoplasmic; the sequence is DRYLAIVHAVFALKARTVTFG. Tyr152 carries the phosphotyrosine; by JAK2 modification. The helical transmembrane segment at 171–191 threads the bilayer; that stretch reads VITSVVTWVVAVFASLPGIIF. Residues 192–220 are Extracellular-facing; sequence TKSEQEDDQHTCGPYFPTIWKNFQTIMRN. A helical transmembrane segment spans residues 221-241; it reads ILSLILPLLVMVICYSGILHT. Residues 242–256 lie on the Cytoplasmic side of the membrane; the sequence is LFRCRNEKKRHRAVR. The chain crosses the membrane as a helical span at residues 257–277; the sequence is LIFAIMIVYFLFWTPYNIVLF. At 278–301 the chain is on the extracellular side; it reads LTTFQEFLGMSNCVVDMHLDQAMQ. A helical membrane pass occupies residues 302–322; the sequence is VTETLGMTHCCVNPIIYAFVG. At 323 to 373 the chain is on the cytoplasmic side; sequence EKFRRYLSIFFRKHIAKNLCKQCPVFYRETADRVSSTFTPSTGEQEVSVGL.

Belongs to the G-protein coupled receptor 1 family. As to quaternary structure, interacts with ARRB1. Interacts (via extracellular N-terminal region) with beta-defensin DEFB106A/DEFB106B; this interaction may preferentially require specific tyrosine sulfation on CCR2. Interacts with NUP85; the interaction is required for CCR2 clusters formation on the cell membrane and CCR2 signaling. In terms of processing, N-glycosylated. Post-translationally, sulfation increases the affinity for both monomeric and dimeric CCL2 with stronger binding to the monomeric form. Binding of sulfated CCR2 to CCL2 promotes conversion of CCL2 from dimer to monomer. In terms of tissue distribution, expressed in lung, spleen, kidney, thymus and macrophages.

It is found in the cell membrane. In terms of biological role, key functional receptor for CCL2 but can also bind CCL7 and CCL12. Its binding with CCL2 on monocytes and macrophages mediates chemotaxis and migration induction through the activation of the PI3K cascade, the small G protein Rac and lamellipodium protrusion. Also acts as a receptor for the beta-defensin DEFB106A/DEFB106B. Regulates the expression of T-cell inflammatory cytokines and T-cell differentiation, promoting the differentiation of T-cells into T-helper 17 cells (Th17) during inflammation. Facilitates the export of mature thymocytes by enhancing directional movement of thymocytes to sphingosine-1-phosphate stimulation and up-regulation of S1P1R expression; signals through the JAK-STAT pathway to regulate FOXO1 activity leading to an increased expression of S1P1R. Plays an important role in mediating peripheral nerve injury-induced neuropathic pain. Increases NMDA-mediated synaptic transmission in both dopamine D1 and D2 receptor-containing neurons, which may be caused by MAPK/ERK-dependent phosphorylation of GRIN2B/NMDAR2B. Mediates the recruitment of macrophages and monocytes to the injury site following brain injury. The sequence is that of C-C chemokine receptor type 2 (Ccr2) from Rattus norvegicus (Rat).